The sequence spans 326 residues: Beta-ketoacyl-[acyl-carrier-protein] synthase III (326 aa).

Residues cysteine 120 and histidine 253 contribute to the active site. The interval 254–258 is ACP-binding; it reads QANIR. The active site involves asparagine 283.

Belongs to the thiolase-like superfamily. FabH family. As to quaternary structure, homodimer.

Its subcellular location is the cytoplasm. It carries out the reaction malonyl-[ACP] + acetyl-CoA + H(+) = 3-oxobutanoyl-[ACP] + CO2 + CoA. Its pathway is lipid metabolism; fatty acid biosynthesis. Functionally, catalyzes the condensation reaction of fatty acid synthesis by the addition to an acyl acceptor of two carbons from malonyl-ACP. Catalyzes the first condensation reaction which initiates fatty acid synthesis and may therefore play a role in governing the total rate of fatty acid production. Possesses both acetoacetyl-ACP synthase and acetyl transacylase activities. Its substrate specificity determines the biosynthesis of branched-chain and/or straight-chain of fatty acids. This chain is Beta-ketoacyl-[acyl-carrier-protein] synthase III, found in Cupriavidus necator (strain ATCC 17699 / DSM 428 / KCTC 22496 / NCIMB 10442 / H16 / Stanier 337) (Ralstonia eutropha).